The primary structure comprises 124 residues: Small ribosomal subunit protein uS12 (124 aa).

The interval 1–20 (MPTIQQLVRKGRTPKVVKTK) is disordered. A compositionally biased stretch (basic residues) spans 9–18 (RKGRTPKVVK). Asp89 is modified (3-methylthioaspartic acid).

This sequence belongs to the universal ribosomal protein uS12 family. In terms of assembly, part of the 30S ribosomal subunit. Contacts proteins S8 and S17. May interact with IF1 in the 30S initiation complex.

Functionally, with S4 and S5 plays an important role in translational accuracy. In terms of biological role, interacts with and stabilizes bases of the 16S rRNA that are involved in tRNA selection in the A site and with the mRNA backbone. Located at the interface of the 30S and 50S subunits, it traverses the body of the 30S subunit contacting proteins on the other side and probably holding the rRNA structure together. The combined cluster of proteins S8, S12 and S17 appears to hold together the shoulder and platform of the 30S subunit. This Clavibacter michiganensis subsp. michiganensis (strain NCPPB 382) protein is Small ribosomal subunit protein uS12.